A 250-amino-acid polypeptide reads, in one-letter code: Uracil-DNA glycosylase (250 aa).

Asp78 acts as the Proton acceptor in catalysis.

This sequence belongs to the uracil-DNA glycosylase (UDG) superfamily. UNG family.

It is found in the cytoplasm. The catalysed reaction is Hydrolyzes single-stranded DNA or mismatched double-stranded DNA and polynucleotides, releasing free uracil.. Excises uracil residues from the DNA which can arise as a result of misincorporation of dUMP residues by DNA polymerase or due to deamination of cytosine. In Albidiferax ferrireducens (strain ATCC BAA-621 / DSM 15236 / T118) (Rhodoferax ferrireducens), this protein is Uracil-DNA glycosylase.